The following is a 391-amino-acid chain: Formate-dependent phosphoribosylglycinamide formyltransferase (391 aa).

N(1)-(5-phospho-beta-D-ribosyl)glycinamide-binding positions include 20 to 21 and E80; that span reads EL. Residues R112, K153, 158–163, 193–196, and E201 contribute to the ATP site; these read SSGKGQ and EGFV. Residues 117-306 form the ATP-grasp domain; sequence RLAAEELGLP…EFALHVRAFT (190 aa). The Mg(2+) site is built by E265 and E277. Residues D284, K354, and 361–362 each bind N(1)-(5-phospho-beta-D-ribosyl)glycinamide; that span reads RR.

The protein belongs to the PurK/PurT family. As to quaternary structure, homodimer.

The catalysed reaction is N(1)-(5-phospho-beta-D-ribosyl)glycinamide + formate + ATP = N(2)-formyl-N(1)-(5-phospho-beta-D-ribosyl)glycinamide + ADP + phosphate + H(+). It functions in the pathway purine metabolism; IMP biosynthesis via de novo pathway; N(2)-formyl-N(1)-(5-phospho-D-ribosyl)glycinamide from N(1)-(5-phospho-D-ribosyl)glycinamide (formate route): step 1/1. Involved in the de novo purine biosynthesis. Catalyzes the transfer of formate to 5-phospho-ribosyl-glycinamide (GAR), producing 5-phospho-ribosyl-N-formylglycinamide (FGAR). Formate is provided by PurU via hydrolysis of 10-formyl-tetrahydrofolate. This is Formate-dependent phosphoribosylglycinamide formyltransferase from Vibrio cholerae serotype O1 (strain ATCC 39315 / El Tor Inaba N16961).